The following is a 293-amino-acid chain: 4-diphosphocytidyl-2-C-methyl-D-erythritol kinase (293 aa).

Lys16 is a catalytic residue. ATP is bound at residue 99–109 (PMGAGLGGGSS). The active site involves Asp141.

This sequence belongs to the GHMP kinase family. IspE subfamily.

The catalysed reaction is 4-CDP-2-C-methyl-D-erythritol + ATP = 4-CDP-2-C-methyl-D-erythritol 2-phosphate + ADP + H(+). It functions in the pathway isoprenoid biosynthesis; isopentenyl diphosphate biosynthesis via DXP pathway; isopentenyl diphosphate from 1-deoxy-D-xylulose 5-phosphate: step 3/6. Its function is as follows. Catalyzes the phosphorylation of the position 2 hydroxy group of 4-diphosphocytidyl-2C-methyl-D-erythritol. The sequence is that of 4-diphosphocytidyl-2-C-methyl-D-erythritol kinase from Burkholderia orbicola (strain MC0-3).